The chain runs to 171 residues: Outer membrane lipoprotein Blc (171 aa).

An N-terminal signal peptide occupies residues 1–15 (MRAIFLILCSVLLNG). A lipid anchor (N-palmitoyl cysteine) is attached at cysteine 16. Cysteine 16 carries the S-diacylglycerol cysteine lipid modification.

Belongs to the calycin superfamily. Lipocalin family. In terms of assembly, homodimer.

It localises to the cell outer membrane. Involved in the storage or transport of lipids necessary for membrane maintenance under stressful conditions. Displays a binding preference for lysophospholipids. This is Outer membrane lipoprotein Blc (blc) from Vibrio cholerae serotype O1 (strain ATCC 39315 / El Tor Inaba N16961).